A 374-amino-acid polypeptide reads, in one-letter code: Queuine tRNA-ribosyltransferase (374 aa).

Residue Asp-89 is the Proton acceptor of the active site. Substrate contacts are provided by residues Asp-89 to Phe-93, Asp-143, Gln-187, and Gly-214. The RNA binding stretch occupies residues Gly-245–Asp-251. Asp-264 serves as the catalytic Nucleophile. The segment at Thr-269–Arg-273 is RNA binding; important for wobble base 34 recognition. 4 residues coordinate Zn(2+): Cys-302, Cys-304, Cys-307, and His-333.

Belongs to the queuine tRNA-ribosyltransferase family. As to quaternary structure, homodimer. Within each dimer, one monomer is responsible for RNA recognition and catalysis, while the other monomer binds to the replacement base PreQ1. It depends on Zn(2+) as a cofactor.

The catalysed reaction is 7-aminomethyl-7-carbaguanine + guanosine(34) in tRNA = 7-aminomethyl-7-carbaguanosine(34) in tRNA + guanine. Its pathway is tRNA modification; tRNA-queuosine biosynthesis. In terms of biological role, catalyzes the base-exchange of a guanine (G) residue with the queuine precursor 7-aminomethyl-7-deazaguanine (PreQ1) at position 34 (anticodon wobble position) in tRNAs with GU(N) anticodons (tRNA-Asp, -Asn, -His and -Tyr). Catalysis occurs through a double-displacement mechanism. The nucleophile active site attacks the C1' of nucleotide 34 to detach the guanine base from the RNA, forming a covalent enzyme-RNA intermediate. The proton acceptor active site deprotonates the incoming PreQ1, allowing a nucleophilic attack on the C1' of the ribose to form the product. After dissociation, two additional enzymatic reactions on the tRNA convert PreQ1 to queuine (Q), resulting in the hypermodified nucleoside queuosine (7-(((4,5-cis-dihydroxy-2-cyclopenten-1-yl)amino)methyl)-7-deazaguanosine). This chain is Queuine tRNA-ribosyltransferase, found in Shewanella baltica (strain OS185).